A 258-amino-acid chain; its full sequence is tRNA (guanine-N(7)-)-methyltransferase (258 aa).

The segment at 1-42 (MPETPLMRDNGPVNHADQDAPAVPEEGQTKDSKGSRLHPRVT) is disordered. Residues Glu-90, Glu-115, Asp-142, and Asp-165 each contribute to the S-adenosyl-L-methionine site. Asp-165 is an active-site residue. Substrate is bound by residues Lys-169, Asp-201, and 235–238 (TKFE).

The protein belongs to the class I-like SAM-binding methyltransferase superfamily. TrmB family.

It catalyses the reaction guanosine(46) in tRNA + S-adenosyl-L-methionine = N(7)-methylguanosine(46) in tRNA + S-adenosyl-L-homocysteine. The protein operates within tRNA modification; N(7)-methylguanine-tRNA biosynthesis. Functionally, catalyzes the formation of N(7)-methylguanine at position 46 (m7G46) in tRNA. The protein is tRNA (guanine-N(7)-)-methyltransferase of Rhodococcus jostii (strain RHA1).